The chain runs to 187 residues: MKIIGILGIQGDIEEHEDAVKKINCIPKRIRTVDDLEGIDALIIPGGESTTIGKLMVSYGFIDKIRNLKIPILGTCAGMVLLSKGTGKEQPLLEMLNVTIKRNAYGSQKDSFEKEIDLGGKKINAVFIRAPQVGEILSKDVEIISKDDENIVGIKEGNIMAISFHPELSDDGVIAYEYFLKNFVEKR.

An L-glutamine-binding site is contributed by 47–49; sequence GES. The active-site Nucleophile is the Cys-76. L-glutamine is bound by residues Arg-102 and 128–129; that span reads IR. Residues His-165 and Glu-167 each act as charge relay system in the active site.

This sequence belongs to the glutaminase PdxT/SNO family. As to quaternary structure, in the presence of PdxS, forms a dodecamer of heterodimers. Only shows activity in the heterodimer.

The catalysed reaction is aldehydo-D-ribose 5-phosphate + D-glyceraldehyde 3-phosphate + L-glutamine = pyridoxal 5'-phosphate + L-glutamate + phosphate + 3 H2O + H(+). It carries out the reaction L-glutamine + H2O = L-glutamate + NH4(+). The protein operates within cofactor biosynthesis; pyridoxal 5'-phosphate biosynthesis. Catalyzes the hydrolysis of glutamine to glutamate and ammonia as part of the biosynthesis of pyridoxal 5'-phosphate. The resulting ammonia molecule is channeled to the active site of PdxS. The sequence is that of Pyridoxal 5'-phosphate synthase subunit PdxT from Methanococcus maripaludis (strain DSM 14266 / JCM 13030 / NBRC 101832 / S2 / LL).